A 496-amino-acid chain; its full sequence is NAD(P)H-quinone oxidoreductase subunit 2, chloroplastic (496 aa).

The next 14 membrane-spanning stretches (helical) occupy residues 14 to 34 (SFLP…LDLV), 42 to 62 (MLVK…IQQW), 79 to 99 (FTTC…PLSF), 109 to 129 (LTEF…LSSA), 133 to 153 (ITIF…TGYV), 167 to 187 (LIIG…LYGL), 210 to 230 (LASW…LSLV), 244 to 264 (PTPV…ALTI), 281 to 301 (ILQI…MVET), 305 to 325 (RILT…IVAG), 334 to 354 (LVYM…IILF), 377 to 397 (ASCL…TGFF), 400 to 420 (ILLF…TGIF), and 469 to 489 (IYLC…VIYF).

Belongs to the complex I subunit 2 family. NDH is composed of at least 16 different subunits, 5 of which are encoded in the nucleus.

The protein localises to the plastid. It localises to the chloroplast thylakoid membrane. The catalysed reaction is a plastoquinone + NADH + (n+1) H(+)(in) = a plastoquinol + NAD(+) + n H(+)(out). It catalyses the reaction a plastoquinone + NADPH + (n+1) H(+)(in) = a plastoquinol + NADP(+) + n H(+)(out). Its function is as follows. NDH shuttles electrons from NAD(P)H:plastoquinone, via FMN and iron-sulfur (Fe-S) centers, to quinones in the photosynthetic chain and possibly in a chloroplast respiratory chain. The immediate electron acceptor for the enzyme in this species is believed to be plastoquinone. Couples the redox reaction to proton translocation, and thus conserves the redox energy in a proton gradient. This chain is NAD(P)H-quinone oxidoreductase subunit 2, chloroplastic, found in Chara vulgaris (Common stonewort).